The following is a 270-amino-acid chain: Probable septum site-determining protein MinC (270 aa).

Residues 105–129 (DRRAPSSKAADEAPVQQAEPAAPAA) are disordered. Over residues 116-129 (EAPVQQAEPAAPAA) the composition is skewed to low complexity.

Belongs to the MinC family. Interacts with MinD and FtsZ.

In terms of biological role, cell division inhibitor that blocks the formation of polar Z ring septums. Rapidly oscillates between the poles of the cell to destabilize FtsZ filaments that have formed before they mature into polar Z rings. Prevents FtsZ polymerization. This chain is Probable septum site-determining protein MinC, found in Burkholderia mallei (strain NCTC 10247).